We begin with the raw amino-acid sequence, 650 residues long: Acetyl-coenzyme A synthetase (650 aa).

Residues 191-194 (RGGR), threonine 311, and asparagine 335 contribute to the CoA site. ATP-binding positions include 387-389 (GEP), 411-416 (DTWWQT), aspartate 500, and arginine 515. Serine 523 contributes to the CoA binding site. Residue arginine 526 participates in ATP binding. Mg(2+)-binding residues include valine 537, histidine 539, and valine 542. Arginine 584 is a CoA binding site. N6-acetyllysine is present on lysine 609.

This sequence belongs to the ATP-dependent AMP-binding enzyme family. Requires Mg(2+) as cofactor. Post-translationally, acetylated. Deacetylation by the SIR2-homolog deacetylase activates the enzyme.

The enzyme catalyses acetate + ATP + CoA = acetyl-CoA + AMP + diphosphate. Its function is as follows. Catalyzes the conversion of acetate into acetyl-CoA (AcCoA), an essential intermediate at the junction of anabolic and catabolic pathways. AcsA undergoes a two-step reaction. In the first half reaction, AcsA combines acetate with ATP to form acetyl-adenylate (AcAMP) intermediate. In the second half reaction, it can then transfer the acetyl group from AcAMP to the sulfhydryl group of CoA, forming the product AcCoA. The polypeptide is Acetyl-coenzyme A synthetase (Shewanella sp. (strain W3-18-1)).